Reading from the N-terminus, the 478-residue chain is uncharacterized protein (478 aa).

Positions 2–120 (MNMITVIGFG…NIDKIINILE (119 aa)) constitute an RCK N-terminal domain.

This is an uncharacterized protein from Methanocaldococcus jannaschii (strain ATCC 43067 / DSM 2661 / JAL-1 / JCM 10045 / NBRC 100440) (Methanococcus jannaschii).